Reading from the N-terminus, the 481-residue chain is Argininosuccinate lyase (481 aa).

The protein belongs to the lyase 1 family. Argininosuccinate lyase subfamily.

Its subcellular location is the cytoplasm. The enzyme catalyses 2-(N(omega)-L-arginino)succinate = fumarate + L-arginine. The protein operates within amino-acid biosynthesis; L-arginine biosynthesis; L-arginine from L-ornithine and carbamoyl phosphate: step 3/3. The protein is Argininosuccinate lyase of Methanococcus maripaludis (strain DSM 14266 / JCM 13030 / NBRC 101832 / S2 / LL).